A 1979-amino-acid polypeptide reads, in one-letter code: Myosin-11 (1979 aa).

S2 bears the Blocked amino end (Ser) mark. One can recognise a Myosin N-terminal SH3-like domain in the interval 30–80 (SAKKLVWVPSEKHGFEAASIKEEKGDEVTVELQENGKKVTLSKDDIQKMNP). Residues 84 to 789 (SKVEDMAELT…VLAHLEEERD (706 aa)) enclose the Myosin motor domain. At K128 the chain carries N6,N6,N6-trimethyllysine. 177 to 184 (GESGAGKT) is an ATP binding site. Actin-binding stretches follow at residues 667–689 (LTKL…IPNH) and 768–782 (RIGQ…GVLA). An IQ domain is found at 792-821 (ITDVIIAFQAQCRGYLARKAFAKRQQQLTA). Positions 850–1979 (LLQVTRQEEE…DGDFNGKASE (1130 aa)) are rodlike tail (S2 and LMM domains). Positions 850-1979 (LLQVTRQEEE…DGDFNGKASE (1130 aa)) form a coiled coil. Disordered stretches follow at residues 1130–1150 (QEDL…KRDL), 1709–1736 (RKQA…LQDE), and 1891–1979 (QLEE…KASE). Basic and acidic residues predominate over residues 1135–1150 (SEKAARNKAEKQKRDL). Residues 1968 to 1979 (GRDGDFNGKASE) show a composition bias toward basic and acidic residues.

The protein belongs to the TRAFAC class myosin-kinesin ATPase superfamily. Myosin family. Muscle myosin is a hexameric protein that consists of 2 heavy chain subunits (MHC), 2 alkali light chain subunits (MLC) and 2 regulatory light chain subunits (MLC-2).

Its subcellular location is the cytoplasm. It localises to the myofibril. In terms of biological role, muscle contraction. In Gallus gallus (Chicken), this protein is Myosin-11 (MYH11).